Consider the following 268-residue polypeptide: Gasdermin bGSDM (268 aa).

Cys3 is lipidated: S-palmitoyl cysteine. The next 4 beta stranded transmembrane spans lie at 78-94 (IDLR…AAKI), 103-121 (APSF…FHIE), 168-185 (KMRM…GVDV), and 195-211 (AKLE…RLVF). A C-terminal region region spans residues 248 to 268 (GENMALNLFTEIQDAGFIEVT).

It belongs to the bacterial gasdermin family. In terms of assembly, monomer in solution. As to quaternary structure, forms large, homooligomeric ring-shaped pores when inserted in membranes. Post-translationally, cleavage by the adjacently encoded protease (G563DRAFT_02009) between Leu-247 and Gly-248 relieves autoinhibition, releasing the N-terminus which initiates loss of cell integrity. Palmitoylation helps stabilize the inactive state; may self-palmitoylate. Palmitoylation is not required for permeabilization of liposomes by the ring-like pores in vitro. Palmitoylation plays a significant role in pore formation.

It localises to the cytoplasm. The protein resides in the cell inner membrane. The full-length protein before cleavage is inactive: intramolecular interactions between the N-terminal domain and the C-terminal region, as well as the lipid modification, mediate autoinhibition. The pyroptosis-like-inducing activity is carried by the released N-terminal domain (gasdermin bGSDM, N-terminus). Precursor of a pore-forming protein involved in defense against bacteriophages. Cleavage of this precursor by its dedicated, neighboring protease (G563DRAFT_02009) releases the active moiety (gasdermin bGSDM, N-terminus) which inserts into membranes, forming pores and triggering cell death. Expression of bGSDM and its protease is highly toxic in E.coli. Cells expressing the gene pair stop dividing and lose membrane integrity. Both proteins are required to kill E.coli. Functionally, pore-forming protein that causes membrane permeabilization via a pyroptosis-like activity. Makes ring-like pores with walls about 50 Angstroms thick and an interior pore diameter of 200-300 Angstroms, when integrated in liposomes. The sequence is that of Gasdermin bGSDM from Runella zeae (strain ATCC BAA-293 / DSM 19591 / LMG 21438 / NS12).